The following is a 105-amino-acid chain: Small ribosomal subunit protein uS17 (105 aa).

Belongs to the universal ribosomal protein uS17 family. Part of the 30S ribosomal subunit.

In terms of biological role, one of the primary rRNA binding proteins, it binds specifically to the 5'-end of 16S ribosomal RNA. The protein is Small ribosomal subunit protein uS17 of Thermus thermophilus (strain ATCC BAA-163 / DSM 7039 / HB27).